Consider the following 1024-residue polypeptide: Beta-galactosidase (1024 aa).

Substrate-binding residues include asparagine 103 and aspartate 202. Na(+) is bound at residue aspartate 202. Positions 417, 419, and 462 each coordinate Mg(2+). Substrate is bound by residues glutamate 462 and 538–541 (EYAH). Glutamate 462 functions as the Proton donor in the catalytic mechanism. Glutamate 538 serves as the catalytic Nucleophile. Position 598 (asparagine 598) interacts with Mg(2+). The Na(+) site is built by phenylalanine 602 and asparagine 605. Substrate-binding residues include asparagine 605 and tryptophan 1000.

The protein belongs to the glycosyl hydrolase 2 family. As to quaternary structure, homotetramer. It depends on Mg(2+) as a cofactor. Requires Na(+) as cofactor.

The enzyme catalyses Hydrolysis of terminal non-reducing beta-D-galactose residues in beta-D-galactosides.. The polypeptide is Beta-galactosidase (Escherichia coli O6:K15:H31 (strain 536 / UPEC)).